The chain runs to 63 residues: Chymotrypsin inhibitor SCI-III (63 aa).

A BPTI/Kunitz inhibitor domain is found at 10–61 (CEQAFGDAGLCFGYMKLYSYNQETKNCEEFIYGGCQGNDNRFSTLAECEQKC). Cystine bridges form between cysteine 10-cysteine 61, cysteine 20-cysteine 44, and cysteine 36-cysteine 57.

Functionally, inhibits chymotrypsin and thus avoids the accidental chymotrypsin-mediated activation of prophenoloxidase. This enzyme is required by the insect immune system to produce melanin which is used to engulf foreign objects. This chain is Chymotrypsin inhibitor SCI-III, found in Bombyx mori (Silk moth).